A 545-amino-acid chain; its full sequence is Glucose-6-phosphate isomerase (545 aa).

Glutamate 351 functions as the Proton donor in the catalytic mechanism. Active-site residues include histidine 382 and lysine 510.

Belongs to the GPI family.

It localises to the cytoplasm. The catalysed reaction is alpha-D-glucose 6-phosphate = beta-D-fructose 6-phosphate. It functions in the pathway carbohydrate biosynthesis; gluconeogenesis. The protein operates within carbohydrate degradation; glycolysis; D-glyceraldehyde 3-phosphate and glycerone phosphate from D-glucose: step 2/4. Its function is as follows. Catalyzes the reversible isomerization of glucose-6-phosphate to fructose-6-phosphate. The protein is Glucose-6-phosphate isomerase of Shewanella halifaxensis (strain HAW-EB4).